The sequence spans 647 residues: 5-aminolevulinate synthase, non-specific, mitochondrial (647 aa).

Residues 1–56 constitute a mitochondrion transit peptide; it reads METVVRRCPFLSRVPQAFLQKAGKSLLFYAQNCPKMMEIGAKPAPRALSTSAVLCQ. The segment at 61 to 112 is disordered; that stretch reads TPPANEKDKAAKAEVQQAPDGSQQAPDGSQQTADGTQLPSGHPSLASSQGTG. A compositionally biased stretch (polar residues) spans 79–112; it reads PDGSQQAPDGSQQTADGTQLPSGHPSLASSQGTG. Arg224, Ser341, and Lys360 together coordinate substrate. Positions 393, 421, and 449 each coordinate pyridoxal 5'-phosphate. The active site involves Lys452. Residue Lys452 is modified to N6-(pyridoxal phosphate)lysine. Residues Thr481 and Thr482 each coordinate pyridoxal 5'-phosphate. Thr569 provides a ligand contact to substrate. Pro583 carries the post-translational modification Hydroxyproline.

It belongs to the class-II pyridoxal-phosphate-dependent aminotransferase family. As to quaternary structure, homodimer. Interacts (hydroxylated form) with VHL. Pyridoxal 5'-phosphate is required as a cofactor. In terms of processing, in normoxia, is hydroxylated at Pro-583, promoting interaction with VHL, initiating ubiquitination and subsequent degradation via the proteasome. Ubiquitinated; in normoxia following hydroxylation and interaction with VHL, leading to its subsequent degradation via the proteasome.

Its subcellular location is the mitochondrion inner membrane. It carries out the reaction succinyl-CoA + glycine + H(+) = 5-aminolevulinate + CO2 + CoA. It functions in the pathway porphyrin-containing compound metabolism; protoporphyrin-IX biosynthesis; 5-aminolevulinate from glycine: step 1/1. Catalyzes the pyridoxal 5'-phosphate (PLP)-dependent condensation of succinyl-CoA and glycine to form aminolevulinic acid (ALA), with CoA and CO2 as by-products. The chain is 5-aminolevulinate synthase, non-specific, mitochondrial (ALAS1) from Bos taurus (Bovine).